Here is a 456-residue protein sequence, read N- to C-terminus: Potassium voltage-gated channel subfamily A member 7 (456 aa).

Residues Val-144–Thr-164 traverse the membrane as a helical segment. N-linked (GlcNAc...) asparagine glycosylation is present at Asn-191. Residues Phe-209–Leu-229 form a helical membrane-spanning segment. The S-palmitoyl cysteine moiety is linked to residue Cys-231. A helical membrane pass occupies residues Val-241–Leu-261. The chain crosses the membrane as a helical; Voltage-sensor span at residues Ile-276 to Ser-295. Residues Leu-312–Phe-332 traverse the membrane as a helical segment. Positions Thr-358–Asp-363 match the Selectivity filter motif. A helical membrane pass occupies residues Ile-373–Ile-393.

Belongs to the potassium channel family. A (Shaker) (TC 1.A.1.2) subfamily. Kv1.7/KCNA7 sub-subfamily. In terms of assembly, heterotetramer of potassium channel proteins. Highly expressed in skeletal muscle, heart and kidney.

The protein resides in the membrane. The catalysed reaction is K(+)(in) = K(+)(out). Mediates the voltage-dependent potassium ion permeability of excitable membranes. Assuming opened or closed conformations in response to the voltage difference across the membrane, the protein forms a potassium-selective channel through which potassium ions may pass in accordance with their electrochemical gradient. The polypeptide is Potassium voltage-gated channel subfamily A member 7 (KCNA7) (Homo sapiens (Human)).